A 299-amino-acid polypeptide reads, in one-letter code: tRNA dimethylallyltransferase (299 aa).

11–18 (GPTAVGKT) is a binding site for ATP. 13–18 (TAVGKT) is a substrate binding site. The segment at 36 to 39 (DSQQ) is interaction with substrate tRNA.

It belongs to the IPP transferase family. As to quaternary structure, monomer. It depends on Mg(2+) as a cofactor.

It carries out the reaction adenosine(37) in tRNA + dimethylallyl diphosphate = N(6)-dimethylallyladenosine(37) in tRNA + diphosphate. Its function is as follows. Catalyzes the transfer of a dimethylallyl group onto the adenine at position 37 in tRNAs that read codons beginning with uridine, leading to the formation of N6-(dimethylallyl)adenosine (i(6)A). This is tRNA dimethylallyltransferase from Streptococcus pyogenes serotype M6 (strain ATCC BAA-946 / MGAS10394).